Consider the following 848-residue polypeptide: Adenylate cyclase (848 aa).

The catalytic stretch occupies residues 1 to 535; sequence MYLYIETLKQ…DVSHHFPLRL (535 aa). The interval 541-848 is regulatory; the sequence is KALYSPCEIR…DTPLLQQYFS (308 aa). H609 carries the post-translational modification Phosphohistidine; by CRR.

This sequence belongs to the adenylyl cyclase class-1 family.

The protein localises to the cytoplasm. The enzyme catalyses ATP = 3',5'-cyclic AMP + diphosphate. This is Adenylate cyclase (cyaA) from Shigella flexneri.